Here is a 554-residue protein sequence, read N- to C-terminus: Glucose-6-phosphate isomerase (554 aa).

Glu358 functions as the Proton donor in the catalytic mechanism. Catalysis depends on residues His389 and Lys515. The segment covering 527-540 (ADNSPAPQSDSSTD) has biased composition (polar residues). A disordered region spans residues 527-554 (ADNSPAPQSDSSTDALVRRYRSERGRTS). A compositionally biased stretch (basic and acidic residues) spans 542–554 (LVRRYRSERGRTS).

This sequence belongs to the GPI family.

It is found in the cytoplasm. The catalysed reaction is alpha-D-glucose 6-phosphate = beta-D-fructose 6-phosphate. It participates in carbohydrate biosynthesis; gluconeogenesis. It functions in the pathway carbohydrate degradation; glycolysis; D-glyceraldehyde 3-phosphate and glycerone phosphate from D-glucose: step 2/4. Functionally, catalyzes the reversible isomerization of glucose-6-phosphate to fructose-6-phosphate. The sequence is that of Glucose-6-phosphate isomerase from Mycobacterium avium (strain 104).